The sequence spans 343 residues: Lipase chaperone (343 aa).

The chain crosses the membrane as a helical span at residues 7-27 (IYLGIGLVALLMIFIYWLMPK).

The protein belongs to the lipase chaperone family.

It localises to the cell inner membrane. Its function is as follows. May be involved in the folding of the extracellular lipase during its passage through the periplasm. The protein is Lipase chaperone (lifO) of Acinetobacter baylyi (strain ATCC 33305 / BD413 / ADP1).